The chain runs to 714 residues: Polyribonucleotide nucleotidyltransferase (714 aa).

2 residues coordinate Mg(2+): aspartate 493 and aspartate 499. The KH domain maps to 559-618 (PRIETTKIPADRIGELIGPGGKNIKAIQAESGADINIEEDGTVHIYAAKQEGLDRALELV). Residues 628–696 (GELYTGKIVS…DKGRVKMSIR (69 aa)) enclose the S1 motif domain.

The protein belongs to the polyribonucleotide nucleotidyltransferase family. It depends on Mg(2+) as a cofactor.

It is found in the cytoplasm. It carries out the reaction RNA(n+1) + phosphate = RNA(n) + a ribonucleoside 5'-diphosphate. Its function is as follows. Involved in mRNA degradation. Catalyzes the phosphorolysis of single-stranded polyribonucleotides processively in the 3'- to 5'-direction. The chain is Polyribonucleotide nucleotidyltransferase from Akkermansia muciniphila (strain ATCC BAA-835 / DSM 22959 / JCM 33894 / BCRC 81048 / CCUG 64013 / CIP 107961 / Muc).